The primary structure comprises 181 residues: MCKGLAALPHSCLERAKEIKIKLGILLQKPDSAVDLVIPYNEKPEKPAKAHKPSLEEVLQWRQSLDKLLQSNYGFASFKSFLKSEFSEENLEFWVACENYKKIKSPIKMAEKAKQIYEEFIQTEAPKEVNIDHFTKDITMKNLVEPSPHSFDLAQKRIYALMEKDSLPRFVRSEFYKELIN.

An RGS domain is found at Ser-64 to Ile-180.

It localises to the cytoplasm. It is found in the membrane. Inhibits signal transduction by increasing the GTPase activity of G protein alpha subunits thereby driving them into their inactive GDP-bound form. Binds to G(i)-alpha and G(o)-alpha, but not to G(s)-alpha. This Rattus norvegicus (Rat) protein is Regulator of G-protein signaling 5 (Rgs5).